The primary structure comprises 149 residues: Large ribosomal subunit protein bL20m (149 aa).

The N-terminal 9 residues, 1 to 9 (MVFLSAPLW), are a transit peptide targeting the mitochondrion.

It belongs to the bacterial ribosomal protein bL20 family. In terms of assembly, component of the mitochondrial ribosome large subunit (39S) which comprises a 16S rRNA and about 50 distinct proteins. Interacts with OXA1L.

Its subcellular location is the mitochondrion. This Bos taurus (Bovine) protein is Large ribosomal subunit protein bL20m (MRPL20).